Reading from the N-terminus, the 339-residue chain is MRVLGIETSCDETGVAIYDQQQGLLANQLYSQVKLHADYGGVVPELASRDHVHKTVPLIQAALAEAGLQASDIHGVAYTAGPGLVGALMVGATVGRALAYAWGVPAVAVHHMEGHLLAPMLEANPPAFPFVALLVSGGHTQLIAVTGIGEYQLLGESIDDAAGEAFDKTAKLLGLDYPGGPMLARLAQQGVPGRYKFPRPMTDHPGLAFSFSGLKTFAANTVRAGADDHQTRADVARAFEEAVVDTLMIKCRRALDQTRFQRLVMAGGVSANQSLRASMGEMMRQRGGEVFYARPEFCTDNGAMIAYAGMVRLQGGSQASLAVSVRPRWPLEELPALGA.

Fe cation-binding residues include His-111 and His-115. Residues 134-138, Asp-167, Gly-180, and Asn-272 contribute to the substrate site; that span reads LVSGG. Asp-300 is a binding site for Fe cation.

It belongs to the KAE1 / TsaD family. Fe(2+) is required as a cofactor.

It localises to the cytoplasm. The enzyme catalyses L-threonylcarbamoyladenylate + adenosine(37) in tRNA = N(6)-L-threonylcarbamoyladenosine(37) in tRNA + AMP + H(+). Required for the formation of a threonylcarbamoyl group on adenosine at position 37 (t(6)A37) in tRNAs that read codons beginning with adenine. Is involved in the transfer of the threonylcarbamoyl moiety of threonylcarbamoyl-AMP (TC-AMP) to the N6 group of A37, together with TsaE and TsaB. TsaD likely plays a direct catalytic role in this reaction. This Sodalis glossinidius (strain morsitans) protein is tRNA N6-adenosine threonylcarbamoyltransferase.